Consider the following 283-residue polypeptide: Pantothenate synthetase (283 aa).

Position 30 to 37 (30 to 37 (MGNLHAGH)) interacts with ATP. Histidine 37 functions as the Proton donor in the catalytic mechanism. Glutamine 61 serves as a coordination point for (R)-pantoate. Glutamine 61 lines the beta-alanine pocket. Position 149–152 (149–152 (GEKD)) interacts with ATP. Residue glutamine 155 participates in (R)-pantoate binding. Residues valine 178 and 186-189 (LSSR) each bind ATP.

It belongs to the pantothenate synthetase family. In terms of assembly, homodimer.

It is found in the cytoplasm. It carries out the reaction (R)-pantoate + beta-alanine + ATP = (R)-pantothenate + AMP + diphosphate + H(+). It participates in cofactor biosynthesis; (R)-pantothenate biosynthesis; (R)-pantothenate from (R)-pantoate and beta-alanine: step 1/1. Its function is as follows. Catalyzes the condensation of pantoate with beta-alanine in an ATP-dependent reaction via a pantoyl-adenylate intermediate. This Azotobacter vinelandii (strain DJ / ATCC BAA-1303) protein is Pantothenate synthetase.